The primary structure comprises 435 residues: NADH-quinone oxidoreductase subunit D (435 aa).

The protein belongs to the complex I 49 kDa subunit family. NDH-1 is composed of 14 different subunits. Subunits NuoB, C, D, E, F, and G constitute the peripheral sector of the complex.

Its subcellular location is the cell inner membrane. The enzyme catalyses a quinone + NADH + 5 H(+)(in) = a quinol + NAD(+) + 4 H(+)(out). In terms of biological role, NDH-1 shuttles electrons from NADH, via FMN and iron-sulfur (Fe-S) centers, to quinones in the respiratory chain. The immediate electron acceptor for the enzyme in this species is believed to be ubiquinone. Couples the redox reaction to proton translocation (for every two electrons transferred, four hydrogen ions are translocated across the cytoplasmic membrane), and thus conserves the redox energy in a proton gradient. The polypeptide is NADH-quinone oxidoreductase subunit D (Xylella fastidiosa (strain M12)).